A 1357-amino-acid chain; its full sequence is Major yolk protein (1357 aa).

Residues 1–15 form the signal peptide; sequence MRAAILFCLVASSMA. Transferrin-like domains are found at residues 132 to 478 and 493 to 1101; these read VRWC…GEVY and AKIC…AIVK. N-linked (GlcNAc...) asparagine glycosylation is found at Asn198, Asn227, Asn304, Asn310, Asn402, Asn499, Asn530, Asn541, Asn572, Asn578, Asn625, Asn639, Asn692, Asn732, Asn741, Asn1035, Asn1043, Asn1081, Asn1128, Asn1208, Asn1241, and Asn1258.

The protein belongs to the transferrin family. In terms of tissue distribution, synthesized in the intestines of the females and males and also in ovaries and testis.

It localises to the secreted. Its function is as follows. May serve the following two functions: a classical role as a yolk protein precursor and probably shuttle iron to developing germ cells. This is Major yolk protein from Strongylocentrotus purpuratus (Purple sea urchin).